The sequence spans 182 residues: Shikimate kinase (182 aa).

14 to 19 (GAGKTT) provides a ligand contact to ATP. Threonine 18 lines the Mg(2+) pocket. 3 residues coordinate substrate: aspartate 36, arginine 60, and glycine 84. Arginine 122 provides a ligand contact to ATP. Arginine 141 contacts substrate.

It belongs to the shikimate kinase family. As to quaternary structure, monomer. The cofactor is Mg(2+).

It localises to the cytoplasm. It catalyses the reaction shikimate + ATP = 3-phosphoshikimate + ADP + H(+). It participates in metabolic intermediate biosynthesis; chorismate biosynthesis; chorismate from D-erythrose 4-phosphate and phosphoenolpyruvate: step 5/7. Functionally, catalyzes the specific phosphorylation of the 3-hydroxyl group of shikimic acid using ATP as a cosubstrate. This is Shikimate kinase from Marinomonas sp. (strain MWYL1).